The chain runs to 74 residues: MSKLGVLLTICLLLFPLTALPMDGDEPADRPAERMQDNISSEQHPLFEERHGCCKGPEGCSSRECRPQHCCGRR.

Positions 1 to 19 are cleaved as a signal peptide; the sequence is MSKLGVLLTICLLLFPLTA. Positions 20 to 74 are excised as a propeptide; sequence LPMDGDEPADRPAERMQDNISSEQHPLFEERHGCCKGPEGCSSRECRPQHCCGRR. 3 disulfides stabilise this stretch: C53–C65, C54–C70, and C60–C71. A 4-hydroxyproline modification is found at P57. 4-carboxyglutamate is present on residues E58 and E64. A 4-hydroxyproline modification is found at P67. Residue C71 is modified to Cysteine amide.

This sequence belongs to the conotoxin M superfamily. Expressed by the venom duct.

It is found in the secreted. In terms of biological role, mu-conotoxins block voltage-gated sodium channels (Nav). In vitro, this synthetic peptide displays a low blocking effect in mouse extensor digitorum longus muscles (IC(50)=616 nM). The protein is Mu-conotoxin-like T3.1 of Conus tulipa (Fish-hunting cone snail).